Here is a 64-residue protein sequence, read N- to C-terminus: Large ribosomal subunit protein bL35 (64 aa).

Basic residues predominate over residues 1-15 (MPKNKTHSGASKRFR). Residues 1–20 (MPKNKTHSGASKRFRVTGSG) are disordered.

It belongs to the bacterial ribosomal protein bL35 family.

The sequence is that of Large ribosomal subunit protein bL35 from Nocardioides sp. (strain ATCC BAA-499 / JS614).